Consider the following 183-residue polypeptide: Bifunctional protein PyrR (183 aa).

Substrate is bound by residues 46 to 47 (TR), arginine 87, 107 to 115 (DDVIFSGRT), arginine 140, and valine 164. The short motif at 103–115 (VVLVDDVIFSGRT) is the PRPP-binding element.

The protein belongs to the purine/pyrimidine phosphoribosyltransferase family. PyrR subfamily.

It catalyses the reaction UMP + diphosphate = 5-phospho-alpha-D-ribose 1-diphosphate + uracil. Regulates the transcription of the pyrimidine nucleotide (pyr) operon in response to exogenous pyrimidines. In terms of biological role, also displays a weak uracil phosphoribosyltransferase activity which is not physiologically significant. The chain is Bifunctional protein PyrR from Thermosynechococcus vestitus (strain NIES-2133 / IAM M-273 / BP-1).